The following is a 416-amino-acid chain: Adenylosuccinate synthetase (416 aa).

GTP contacts are provided by residues 11-17 and 39-41; these read GDEGKGK and GHT. Residue aspartate 12 is the Proton acceptor of the active site. Mg(2+) is bound by residues aspartate 12 and glycine 39. IMP is bound by residues 12–15, 37–40, threonine 125, arginine 139, glutamine 214, threonine 229, and arginine 290; these read DEGK and NAGH. Histidine 40 acts as the Proton donor in catalysis. 286-292 is a binding site for substrate; that stretch reads TTTGRPR. Residues arginine 292, 318 to 320, and 405 to 407 each bind GTP; these read KLD and SLG.

It belongs to the adenylosuccinate synthetase family. In terms of assembly, homodimer. The cofactor is Mg(2+).

It localises to the cytoplasm. The catalysed reaction is IMP + L-aspartate + GTP = N(6)-(1,2-dicarboxyethyl)-AMP + GDP + phosphate + 2 H(+). It participates in purine metabolism; AMP biosynthesis via de novo pathway; AMP from IMP: step 1/2. Its function is as follows. Plays an important role in the de novo pathway of purine nucleotide biosynthesis. Catalyzes the first committed step in the biosynthesis of AMP from IMP. The chain is Adenylosuccinate synthetase from Picrophilus torridus (strain ATCC 700027 / DSM 9790 / JCM 10055 / NBRC 100828 / KAW 2/3).